We begin with the raw amino-acid sequence, 591 residues long: V-type ATP synthase alpha chain (591 aa).

233–240 (GPFGAGKT) lines the ATP pocket.

This sequence belongs to the ATPase alpha/beta chains family.

The catalysed reaction is ATP + H2O + 4 H(+)(in) = ADP + phosphate + 5 H(+)(out). Functionally, produces ATP from ADP in the presence of a proton gradient across the membrane. The V-type alpha chain is a catalytic subunit. In Streptococcus pyogenes serotype M3 (strain ATCC BAA-595 / MGAS315), this protein is V-type ATP synthase alpha chain.